A 291-amino-acid polypeptide reads, in one-letter code: Probable aquaporin PIP2-4 (291 aa).

Methionine 1 is modified (N-acetylmethionine). Positions 1-22 (MAKDLDVNESGPPAARDYKDPP) are disordered. An N-acetylalanine; in Probable aquaporin PIP2-4, N-terminally processed modification is found at alanine 2. Residues 2–39 (AKDLDVNESGPPAARDYKDPPPAPFFDMEELRKWPLYR) are Cytoplasmic-facing. Lysine 3 is modified (N6,N6-dimethyllysine). The chain crosses the membrane as a helical span at residues 40–60 (AVIAEFVATLLFLYVSILTVI). Over 61–74 (GYKAQTDATAGGVD) the chain is Extracellular. A helical transmembrane segment spans residues 75–95 (CGGVGILGIAWAFGGMIFVLV). The Cytoplasmic segment spans residues 96–125 (YCTAGISGGHINPAVTVGLFLARKVSLVRT). Residues 107–109 (NPA) carry the NPA 1 motif. Residues 126–146 (VLYIVAQCLGAICGCGFVKAF) traverse the membrane as a helical segment. Residues 147–167 (QSSYYTRYGGGANELADGYNK) are Extracellular-facing. A helical transmembrane segment spans residues 168–188 (GTGLGAEIIGTFVLVYTVFSA). At 189–201 (TDPKRNARDSHVP) the chain is on the cytoplasmic side. Residues 202–222 (VLAPLPIGFAVFMVHLATIPI) form a helical membrane-spanning segment. At 223–249 (TGTGINPARSFGAAVIYNNEKAWDDQW) the chain is on the extracellular side. An NPA 2 motif is present at residues 228–230 (NPA). The helical transmembrane segment at 250–270 (IFWVGPMIGAAAAAFYHQFIL) threads the bilayer. Residues 271 to 291 (RAAAIKALGSFGSFGSFRSFA) lie on the Cytoplasmic side of the membrane. 3 positions are modified to phosphoserine: serine 283, serine 286, and serine 289.

It belongs to the MIP/aquaporin (TC 1.A.8) family. PIP (TC 1.A.8.11) subfamily. In terms of tissue distribution, expressed in roots.

It is found in the cell membrane. Its function is as follows. Aquaporins facilitate the transport of water and small neutral solutes across cell membranes. The sequence is that of Probable aquaporin PIP2-4 (PIP2-4) from Arabidopsis thaliana (Mouse-ear cress).